The primary structure comprises 37 residues: Large ribosomal subunit protein bL36c (37 aa).

Belongs to the bacterial ribosomal protein bL36 family.

The protein localises to the plastid. The protein resides in the chloroplast. The protein is Large ribosomal subunit protein bL36c (rpl36) of Nephroselmis olivacea (Green alga).